We begin with the raw amino-acid sequence, 299 residues long: MKFEKMHGLGNDFILMKDFQRNYPDLAKRLCDRRFGIGADGLVIYSSCKNSNINADYQMRIYNSDGSEAEMCGNAIRCLAKYLAKTEETDGKRLAIATTAGIKRVEIVENFDLMGEINLSGMVGSQEQLVKVNMEKPLLKSSDIPLAVKNDRNDIARQRPIDTPYGIYYLTEVSTGPPHAVIFVQNLLPEEQLLELGPIIEKHDLFPYGTNVEFVKVESSNHLRVQVWERGAGKTLACGTGACAVVVAATINGFCNGMAYVELPGGKLFINWDNNTEELYMIGPAEHVYSGELNNQIFY.

2 residues coordinate substrate: N11 and N63. The active-site Proton donor is C72. Residues 73 to 74, N211, and 229 to 230 contribute to the substrate site; these read GN and ER. Residue C238 is the Proton acceptor of the active site. 239–240 serves as a coordination point for substrate; that stretch reads GT.

Belongs to the diaminopimelate epimerase family. Homodimer.

The protein resides in the cytoplasm. The catalysed reaction is (2S,6S)-2,6-diaminopimelate = meso-2,6-diaminopimelate. The protein operates within amino-acid biosynthesis; L-lysine biosynthesis via DAP pathway; DL-2,6-diaminopimelate from LL-2,6-diaminopimelate: step 1/1. Its function is as follows. Catalyzes the stereoinversion of LL-2,6-diaminopimelate (L,L-DAP) to meso-diaminopimelate (meso-DAP), a precursor of L-lysine and an essential component of the bacterial peptidoglycan. The protein is Diaminopimelate epimerase of Natranaerobius thermophilus (strain ATCC BAA-1301 / DSM 18059 / JW/NM-WN-LF).